We begin with the raw amino-acid sequence, 398 residues long: Lysophospholipid transporter LplT (398 aa).

The next 12 membrane-spanning stretches (helical) occupy residues 16 to 36, 53 to 73, 91 to 111, 139 to 159, 163 to 183, 195 to 213, 227 to 247, 253 to 273, 286 to 306, 310 to 330, 344 to 364, and 372 to 392; these read MIAV…LLFA, ILQM…GQVA, AGAL…LVGV, LMEA…GILA, IVAA…ANLY, SWTP…VVLW, LFWG…PVAL, ATPT…AGAA, MPAG…TTLF, ALLL…NALL, IAVQ…LYSL, and VVGV…ALWL.

Belongs to the major facilitator superfamily. LplT (TC 2.A.1.42) family.

The protein resides in the cell inner membrane. Its function is as follows. Catalyzes the facilitated diffusion of 2-acyl-glycero-3-phosphoethanolamine (2-acyl-GPE) into the cell. The polypeptide is Lysophospholipid transporter LplT (Serratia proteamaculans (strain 568)).